A 459-amino-acid polypeptide reads, in one-letter code: MVLAMESRVAPEIPGLIQPGNVTQDLKMMVCKLLNSPKPTKTFPGSQPVSFQHSDVEEKLLAHDYYVCEKTDGLRVLMFIVINPVTGEQGCFMIDRENNYYLVNGFRFPRLPQKKKEELLETLQDGTLLDGELVIQTNPMTKLQELRYLMFDCLAINGRCLTQSPTSSRLAHLGKEFFKPYFDLRAAYPNRCTTFPFKISMKHMDFSYQLVKVAKSLDKLPHLSDGLIFTPVKAPYTAGGKDSLLLKWKPEQENTVDFKLILDIPMVEDPSLPKDDRNRWYYNYDVKPVFSLYVWQGGADVNSRLKHFDQPFDRKEFEILERTYRKFAELSVSDEEWQNLKNLEQPLNGRIVECAKNQETGAWEMLRFRDDKLNGNHTSVVQKVLESINDSVSLEDLEEIVGDIKRCWDERRANMAGGSGRPLPSQSQNATLSTSKPVHSQPPSNDKEPKYVDEDDWSD.

Catalysis depends on lysine 70, which acts as the N6-GMP-lysine intermediate. A disordered region spans residues 415 to 459; sequence MAGGSGRPLPSQSQNATLSTSKPVHSQPPSNDKEPKYVDEDDWSD. Residues 424–444 are compositionally biased toward polar residues; the sequence is PSQSQNATLSTSKPVHSQPPS.

It belongs to the eukaryotic GTase family. Heterodimer. The mRNA-capping enzyme is composed of two separate chains alpha and beta, respectively a mRNA guanylyltransferase and an mRNA 5'-triphosphate monophosphatase.

The protein resides in the nucleus. The enzyme catalyses a 5'-end diphospho-ribonucleoside in mRNA + GTP + H(+) = a 5'-end (5'-triphosphoguanosine)-ribonucleoside in mRNA + diphosphate. Second step of mRNA capping. Transfer of the GMP moiety of GTP to the 5'-diphosphate terminus of RNA via a covalent enzyme-GMP reaction intermediate. The polypeptide is mRNA-capping enzyme subunit alpha (CEG1) (Saccharomyces cerevisiae (strain ATCC 204508 / S288c) (Baker's yeast)).